The primary structure comprises 97 residues: Ferredoxin-like protein YdiT (97 aa).

This sequence belongs to the bacterial-type ferredoxin family. FixX subfamily.

Its function is as follows. Could be a 3Fe-4S cluster-containing protein. Probably participates in a redox process with YdiQ, YdiR and YdiS. The polypeptide is Ferredoxin-like protein YdiT (ydiT) (Escherichia coli (strain K12)).